Here is a 420-residue protein sequence, read N- to C-terminus: Sulfate adenylyltransferase (420 aa).

It belongs to the sulfate adenylyltransferase family.

It carries out the reaction sulfate + ATP + H(+) = adenosine 5'-phosphosulfate + diphosphate. It functions in the pathway sulfur metabolism; hydrogen sulfide biosynthesis; sulfite from sulfate: step 1/3. This is Sulfate adenylyltransferase from Desulforudis audaxviator (strain MP104C).